The following is a 195-amino-acid chain: SPI-2 type 3 secretion system translocon protein SctB (195 aa).

Positions 44 to 80 (KLMELAKKLRDIMRSYNVEKQRLAWELQVNVLQTQMK) form a coiled coil. 3 helical membrane-spanning segments follow: residues 90-110 (MITAGGAMLSGVLTIGLGAVG), 115-135 (LIAGQAVGHTAGGVMGLGAGV), and 170-190 (EIMQQIIGVGSSLVTVLAEIL).

It belongs to the SctB/EspB family. The core secretion machinery of the T3SS is composed of approximately 20 different proteins, including cytoplasmic components, a base, an export apparatus and a needle. This subunit is involved in the formation of a pore, called the translocon, in host membrane. May form a complex with SseB and SseC/SctE2. SseB is required for correct localization of SseD/SctB2 on the bacterial cell surface. Binds to the chaperone SseA.

Its subcellular location is the secreted. It is found in the cell surface. It localises to the host membrane. Functionally, component of the type III secretion system 2 (SPI-2 T3SS), also called injectisome, which is used to inject bacterial effector proteins into eukaryotic host cells. SseC/SctE2 and SseD/SctB2 are inserted into the host membrane where they form a pore and allow the translocation of effector proteins into the cytosol of target cells. Required for the translocation of SPI-2 effector proteins. Required for systemic Salmonella infection of the mouse. Essential for SpvB-induced actin depolymerization in the host cell cytoplasm. This chain is SPI-2 type 3 secretion system translocon protein SctB, found in Salmonella typhimurium (strain LT2 / SGSC1412 / ATCC 700720).